A 906-amino-acid chain; its full sequence is Protein translocase subunit SecA (906 aa).

ATP contacts are provided by residues Q86, 104–108, and D499; that span reads GEGKT. The interval 862–887 is disordered; that stretch reads KPVVSRIDPKDRNPDDPTSWGRVSRN. Residues C890, C892, C901, and H902 each contribute to the Zn(2+) site.

It belongs to the SecA family. In terms of assembly, monomer and homodimer. Part of the essential Sec protein translocation apparatus which comprises SecA, SecYEG and auxiliary proteins SecDF-YajC and YidC. Zn(2+) serves as cofactor.

It is found in the cell inner membrane. Its subcellular location is the cytoplasm. It carries out the reaction ATP + H2O + cellular proteinSide 1 = ADP + phosphate + cellular proteinSide 2.. In terms of biological role, part of the Sec protein translocase complex. Interacts with the SecYEG preprotein conducting channel. Has a central role in coupling the hydrolysis of ATP to the transfer of proteins into and across the cell membrane, serving both as a receptor for the preprotein-SecB complex and as an ATP-driven molecular motor driving the stepwise translocation of polypeptide chains across the membrane. The protein is Protein translocase subunit SecA of Rickettsia peacockii (strain Rustic).